The primary structure comprises 496 residues: Probable CtpA-like serine protease (496 aa).

Positions 1–16 (MDDKQHTSSSDDERAE) are enriched in basic and acidic residues. The tract at residues 1–27 (MDDKQHTSSSDDERAEIATSNQDQETN) is disordered. The segment covering 18–27 (ATSNQDQETN) has biased composition (polar residues). A helical transmembrane segment spans residues 39 to 59 (FISILIGTILITAVITVVAYI). One can recognise a PDZ domain in the interval 124 to 206 (TKSFNEGVSG…TEVTLTVQRG (83 aa)). Active-site charge relay system residues include serine 329, aspartate 340, and lysine 354.

It belongs to the peptidase S41A family.

Its subcellular location is the cell membrane. This is Probable CtpA-like serine protease from Staphylococcus aureus (strain MSSA476).